A 486-amino-acid polypeptide reads, in one-letter code: Flavin-dependent monooxygenase pboD (486 aa).

Residues D51, G65, and R124 each coordinate FAD. R203 is an active-site residue. D344 and G357 together coordinate FAD.

Belongs to the paxM FAD-dependent monooxygenase family. The cofactor is FAD.

The protein operates within secondary metabolite biosynthesis. Its function is as follows. Flavin-dependent monooxygenase; part of the gene cluster that mediates the biosynthesis of protubonine B, a hydroxylated and diacetylated cyclo-L-Trp-L-Leu derivative. Within the pathway, pboD catalyzes the hydroxylation at C-3 of the indole ring of cyclo-L-Trp-L-Leu and subsequent formation of the pyrrolidine ring, eading to the production of protubonine D. PboD is also able to accept other cyclodipeptides (CDPs) as substrates, including cyclo-L-Trp-L-Trp, cyclo-L-Trp-L-Tyr, cyclo-L-Trp-L-Phe, cyclo-L-Trp-L-Met, cyclo-L-Trp-L-Ala, cyclo-L-Trp-L-Pro and cyclo-L-Trp-Gly. Assays with cyclo-L-Trp-L-Trp, cyclo-L-Trp-L-Tyr, cyclo-L-Trp-L-Phe show similar or even slightly higher conversion yields, compared with that of the natural substrate cyclo-L-Trp-L-Leu, whereas cyclo-L-Trp-L-Pro and cyclo-L-Trp-Gly are accepted by PboD but only with conversion yields of 10 and 4%, respectively. Cyclo-L-Trp-L-His is not accepted as a substrate. The first step of the protubonine B synthesis is performed by the nonribosomal peptide synthetase pboA that catalyzes the formation of cyclo-L-Trp-L-Leu by condensing L-Leu with L-Trp. The flavin-dependent monooxygenase pboD is responsible for hydroxylation at C-3 of the indole ring and subsequent formation of the pyrrolidine ring, leadind to protubonine D. Protubonine D is further diacetylated by two acetyltransferases, pboB and pboC, to form the final product protubonine B via protubonine C. The protein is Flavin-dependent monooxygenase pboD of Aspergillus ustus.